The sequence spans 557 residues: Protein Red (557 aa).

The interval 1–84 is disordered; sequence MPERDSEPFS…RKKKSYYAKL (84 aa). The segment covering 16–25 has biased composition (basic and acidic residues); the sequence is DGHDVDDPHS. Positions 42–53 are enriched in low complexity; sequence TPRAAPTSAPPS. N6-acetyllysine occurs at positions 98 and 137. Residue Lys151 forms a Glycyl lysine isopeptide (Lys-Gly) (interchain with G-Cter in SUMO2) linkage. The interval 181–205 is disordered; it reads KEKEEEELMEKPQKETKKDEDPENK. Ser287 is subject to Phosphoserine. Positions 294 to 303 are enriched in basic residues; the sequence is RNKKLKKKDK. Positions 294–402 are disordered; sequence RNKKLKKKDK…PIDVDKGPGS (109 aa). Over residues 304–313 the composition is skewed to basic and acidic residues; it reads GKLEEKKPPE. Residues Lys310 and Lys331 each participate in a glycyl lysine isopeptide (Lys-Gly) (interchain with G-Cter in SUMO2) cross-link. Residues 332 to 398 show a composition bias toward basic and acidic residues; sequence TPRDKERERY…VDDEPIDVDK (67 aa). 17 repeat units span residues 342–343, 344–345, 346–347, 348–349, 350–351, 352–353, 354–355, 356–357, 358–359, 360–361, 362–363, 364–365, 366–367, 368–369, 370–371, 372–373, and 374–375. Positions 342 to 375 are 17 X 2 AA tandem repeats of R-[ED]; sequence RERERDRERDRDRDRERERERDRERERERDRERE. Residues Lys386, Lys388, Lys404, and Lys408 each participate in a glycyl lysine isopeptide (Lys-Gly) (interchain with G-Cter in SUMO2) cross-link. 2 positions are modified to phosphoserine: Ser417 and Ser460. Thr485 bears the Phosphothreonine mark. Glycyl lysine isopeptide (Lys-Gly) (interchain with G-Cter in SUMO2) cross-links involve residues Lys496, Lys501, and Lys509. Ser536 carries the phosphoserine modification. Residues Lys541, Lys543, Lys544, and Lys553 each participate in a glycyl lysine isopeptide (Lys-Gly) (interchain with G-Cter in SUMO2) cross-link.

It belongs to the RED family. As to quaternary structure, component of the spliceosome B complex. Interacts with SMU1. Interacts with MAD1L1. May interact with DHX15.

Its subcellular location is the nucleus. The protein localises to the nucleoplasm. It is found in the chromosome. It localises to the cytoplasm. The protein resides in the cytoskeleton. Its subcellular location is the spindle pole. Functionally, involved in pre-mRNA splicing as a component of the spliceosome. Auxiliary spliceosomal protein that regulates selection of alternative splice sites in a small set of target pre-mRNA species. Required for normal mitotic cell cycle progression. Recruits MAD1L1 and MAD2L1 to kinetochores, and is required to trigger the spindle assembly checkpoint. Required for normal accumulation of SMU1. In Pongo abelii (Sumatran orangutan), this protein is Protein Red (IK).